The primary structure comprises 764 residues: MGKIIRISGPVVVAEDVEDAKMYDVVKVGEMGLIGEIIKIEGNRSTIQVYEDTAGIRPDEKVENTRRPLSVELGPGILKSIYDGIQRPLDVIKITSGDFIARGLNPPALDRQKKWEFVPAVKKGETVFPGQILGTVQETSLITHRIMVPEGISGKVTMIADGEHRVEDVIATVSGNGKSYDIQMMTTWPVRKARRVQRKLPPEIPLVTGQRVIDALFPVAKGGTAAVPGPFGSGKCVSGDTPVLLDAGERRIGDLFMEAIQDQKNAVEIGQNEEIVRLHDPLRIYSMVGSEIVESVSHAIYHGKSNAIVTVRTENGREVRVTPVHKLFVKIGNSVIERPASEVNEGDEIACASVSENGDSQTVTTTLVLTFDRVVSKEMHSGVFDVYDLMVPDYGYNFIGGNGLIVLHNTVIQHQLAKWSDANIVVYIGCGERGNEMTEILTTFPELKDPNTGQPLMDRTVLIANTSNMPVAAREASIYTGITIAEYYRDMGYDVALMADSTSRWAEALREISGRLEEMPGEEGYPAYLGRRVSEFYERSGRARLVSPDERYGSITVIGAVSPPGGDISEPVSQNTLRVTRVFWALDAALANRRHFPSINWLNSYSLYTEDLRSWYDKNVSSEWSALRERAMEILQRESELQEVAQLVGYDAMPEKEKSILDVARIIREDFLQQSAFDEIDAYCSLKKQYLMLKAIMEIDTYQNKALDSGATMDNLASLAVREKLSRMKIVPEAQVESYYNDLVEEIHKEYGNFIGEKNAEASL.

This sequence belongs to the ATPase alpha/beta chains family. In terms of assembly, has multiple subunits with at least A(3), B(3), C, D, E, F, H, I and proteolipid K(x). In terms of processing, this protein undergoes a protein self splicing that involves a post-translational excision of the VDE intervening region (intein) followed by peptide ligation.

The protein localises to the cell membrane. The enzyme catalyses ATP + H2O + 4 H(+)(in) = ADP + phosphate + 5 H(+)(out). Its function is as follows. Component of the A-type ATP synthase that produces ATP from ADP in the presence of a proton gradient across the membrane. The A chain is the catalytic subunit. This is A-type ATP synthase subunit A from Thermoplasma acidophilum (strain ATCC 25905 / DSM 1728 / JCM 9062 / NBRC 15155 / AMRC-C165).